Reading from the N-terminus, the 62-residue chain is Large ribosomal subunit protein uL29 (62 aa).

It belongs to the universal ribosomal protein uL29 family.

This chain is Large ribosomal subunit protein uL29, found in Geobacter sulfurreducens (strain ATCC 51573 / DSM 12127 / PCA).